A 393-amino-acid polypeptide reads, in one-letter code: NAD(P)H-quinone oxidoreductase subunit H, chloroplastic (393 aa).

The protein belongs to the complex I 49 kDa subunit family. NDH is composed of at least 16 different subunits, 5 of which are encoded in the nucleus.

It is found in the plastid. The protein resides in the chloroplast thylakoid membrane. The catalysed reaction is a plastoquinone + NADH + (n+1) H(+)(in) = a plastoquinol + NAD(+) + n H(+)(out). It carries out the reaction a plastoquinone + NADPH + (n+1) H(+)(in) = a plastoquinol + NADP(+) + n H(+)(out). NDH shuttles electrons from NAD(P)H:plastoquinone, via FMN and iron-sulfur (Fe-S) centers, to quinones in the photosynthetic chain and possibly in a chloroplast respiratory chain. The immediate electron acceptor for the enzyme in this species is believed to be plastoquinone. Couples the redox reaction to proton translocation, and thus conserves the redox energy in a proton gradient. In Oryza nivara (Indian wild rice), this protein is NAD(P)H-quinone oxidoreductase subunit H, chloroplastic.